Here is a 295-residue protein sequence, read N- to C-terminus: ATP synthase gamma chain (295 aa).

The protein belongs to the ATPase gamma chain family. As to quaternary structure, F-type ATPases have 2 components, CF(1) - the catalytic core - and CF(0) - the membrane proton channel. CF(1) has five subunits: alpha(3), beta(3), gamma(1), delta(1), epsilon(1). CF(0) has three main subunits: a, b and c.

The protein localises to the cell inner membrane. In terms of biological role, produces ATP from ADP in the presence of a proton gradient across the membrane. The gamma chain is believed to be important in regulating ATPase activity and the flow of protons through the CF(0) complex. This chain is ATP synthase gamma chain, found in Maricaulis maris (strain MCS10) (Caulobacter maris).